Here is a 417-residue protein sequence, read N- to C-terminus: Leucine-rich repeat-containing protein 42 (417 aa).

LRR repeat units lie at residues 167–188 (CLHSLDLSCCKLGDEHELLAHL), 195–215 (SLTELYLKDNCLSNIGIQKMT), 227–248 (KLKVLDLSSNPGITDRGVCFLF), and 252–273 (LLKFLDLSDTSIQDPSGTLKKI). The interval 360-390 (FFRPKEQKDPDSSNSEKRRHSTKRTGADCVQ) is disordered. Over residues 362–375 (RPKEQKDPDSSNSE) the composition is skewed to basic and acidic residues.

This sequence belongs to the LRRC42 family.

This chain is Leucine-rich repeat-containing protein 42 (lrrc42), found in Xenopus laevis (African clawed frog).